Here is a 157-residue protein sequence, read N- to C-terminus: NudC domain-containing protein 2 (157 aa).

The residue at position 2 (S2) is an N-acetylserine. One can recognise a CS domain in the interval 14–104; the sequence is CATPWGQWYQ…DAANCWTSLL (91 aa). The interval 134–157 is disordered; that stretch reads FDFSGAEISGNYTKGGPDFSNLEK. S142 is modified (phosphoserine). Y145 bears the Phosphotyrosine mark.

Interacts with LIS1.

It localises to the chromosome. The protein resides in the centromere. Its subcellular location is the kinetochore. It is found in the cytoplasm. The protein localises to the cytoskeleton. It localises to the microtubule organizing center. The protein resides in the centrosome. Its subcellular location is the spindle pole. Its function is as follows. May regulate the LIS1/dynein pathway by stabilizing LIS1 with Hsp90 chaperone. The sequence is that of NudC domain-containing protein 2 (Nudcd2) from Rattus norvegicus (Rat).